The following is a 237-amino-acid chain: Glutathione S-transferase psoE (237 aa).

One can recognise a GST N-terminal domain in the interval 2–79 (VFGTLYTFPG…YITSQNEQTT (78 aa)). The glutathione site is built by Arg-37, Lys-49, Val-50, Glu-63, Cys-64, and Asn-99. Lys-49 lines the substrate pocket. In terms of domain architecture, GST C-terminal spans 84 to 222 (DKKEYAEIIK…NNPPEKKPET (139 aa)). Gln-108 contacts substrate. Residues 208-222 (EPKLTNNPPEKKPET) are compositionally biased toward basic and acidic residues. The interval 208–237 (EPKLTNNPPEKKPETVPKNGAAVAIEATQA) is disordered.

It belongs to the GST superfamily. It depends on glutathione as a cofactor.

It functions in the pathway secondary metabolite biosynthesis. Its function is as follows. Glutathione S-transferase; part of the gene cluster that mediates the biosynthesis of pseurotin A, a competitive inhibitor of chitin synthase and an inducer of nerve-cell proliferation. The PKS-NRPS hybrid synthetase psoA is responsible for the biosynthesis of azaspirene, one of the first intermediates having the 1-oxa-7-azaspiro[4,4]-non-2-ene-4,6-dione core of pseurotin, via condensation of one acetyl-CoA, 4 malonyl-CoA, and a L-phenylalanine molecule. The dual-functional monooxygenase/methyltransferase psoF seems to be involved in the addition of the C3 methyl group onto the pseurotin scaffold. Azaspirene is then converted to synerazol through 4 steps including oxidation of C17 by the cytochrome P450 monooxygenase psoD, O-methylation of the hydroxy group of C8 by the methyltransferase psoC, and the trans-to-cis isomerization of the C13 olefin by the glutathione S-transferase psoE. The fourth step of synerazol production is performed by the dual-functional monooxygenase/methyltransferase psoF which seems to catalyze the epoxidation of the intermediate deepoxy-synerazol. Synerazol can be attacked by a water molecule nonenzymatically at two different positions to yield two diol products, pseurotin A and pseurotin D. The sequence is that of Glutathione S-transferase psoE from Aspergillus fumigatus (strain ATCC MYA-4609 / CBS 101355 / FGSC A1100 / Af293) (Neosartorya fumigata).